Consider the following 1088-residue polypeptide: Serine/threonine-protein kinase 11-interacting protein (1088 aa).

LRR repeat units lie at residues 109–130 (SLRH…RGIY), 132–152 (QLET…LSAC), 164–185 (ALLS…LRLL), 187–209 (ALRF…MDLC), 210–231 (ELHH…GPSG), 233–254 (ALGV…EQLR), 255–276 (NLRH…SPLW), and 280–301 (ELRK…RAAT). 2 disordered regions span residues 335–407 (GLSP…SPAG) and 437–533 (LEPS…QKEV). Over residues 346 to 367 (PVGSTPETSGGPDLSDSLSSGG) the composition is skewed to low complexity. Over residues 375 to 385 (HKVKSRVRVRR) the composition is skewed to basic residues. A phosphoserine mark is found at serine 387, serine 389, and serine 392. Residues 447–460 (TPTTSAPSAPPASS) show a composition bias toward low complexity. Serine 470 is modified (phosphoserine). A compositionally biased stretch (acidic residues) spans 508–529 (EEGEMVEQGEEEAGEEEEEEQD). Serine 599 carries the post-translational modification Phosphoserine. 2 disordered regions span residues 724-780 (TPNR…SPPP) and 978-1009 (DAAG…PAVR). Positions 733-742 (EQSLAPSPSA) are enriched in polar residues. A compositionally biased stretch (basic and acidic residues) spans 750-759 (GHGDHLDRAK). Phosphoserine is present on residues serine 761, serine 773, and serine 777. Positions 978-994 (DAAGSPAEPSPPAASGE) are enriched in low complexity.

This sequence belongs to the STK11IP family. As to quaternary structure, found in a ternary complex composed of STK11/LKB1, STK11IP and SMAD4. Interacts with STK11/LKB1 and SMAD4.

It is found in the cytoplasm. In terms of biological role, may regulate STK11/LKB1 function by controlling its subcellular localization. The protein is Serine/threonine-protein kinase 11-interacting protein (STK11IP) of Homo sapiens (Human).